Here is a 445-residue protein sequence, read N- to C-terminus: MARLFGTDGVRGVANRDLTAELALALGSAAARRLSTAGHARRRVAVVGRDPRASGEMLEAAVIAGLTSEGVDALRVGVLPTPAVAYLTSAYDADFGVMISASHNPMPDNGIKIFGPGGHKLDDATEDRIAELVQQGPGERPVGAGIGRVVDAPDALDRYLRHVGKAVTTRLDALTVVVDCAHGAASAAAPLAYRAAGANVLTINADPNGLNINDGCGSTHMETLQAAVVSYGADLGLAHDGDADRCLAVDANGRVIDGDAIMVVLALAMRESGELASDTLVATVMSNLGLHLAMRDAGIEVRTTSVGDRYVLEELRAGSYSLGGEQSGHIVMPSMGTTGDGILTGLRLMSRMAQTRKSLAALAEPMHTLPQVLINVQVADKTTVAQAPSVQSAVAEAEAALGDTGRILLRPSGTEQVVRVMVEAADEDTARQLAVRVAESVSEQR.

The active-site Phosphoserine intermediate is Ser-102. 4 residues coordinate Mg(2+): Ser-102, Asp-240, Asp-242, and Asp-244. A Phosphoserine modification is found at Ser-102.

This sequence belongs to the phosphohexose mutase family. Mg(2+) is required as a cofactor. Activated by phosphorylation.

It carries out the reaction alpha-D-glucosamine 1-phosphate = D-glucosamine 6-phosphate. Catalyzes the conversion of glucosamine-6-phosphate to glucosamine-1-phosphate. This Mycobacterium sp. (strain JLS) protein is Phosphoglucosamine mutase.